Reading from the N-terminus, the 545-residue chain is Chaperonin GroEL (545 aa).

ATP is bound by residues 30 to 33 (TLGP), lysine 51, 87 to 91 (DGTTT), glycine 415, 479 to 481 (NAA), and aspartate 495. The segment at 526–545 (KEDKPDLGGAGGMGGMGGMM) is disordered. Residues 533-545 (GGAGGMGGMGGMM) show a composition bias toward gly residues.

The protein belongs to the chaperonin (HSP60) family. As to quaternary structure, forms a cylinder of 14 subunits composed of two heptameric rings stacked back-to-back. Interacts with the co-chaperonin GroES.

It is found in the cytoplasm. The catalysed reaction is ATP + H2O + a folded polypeptide = ADP + phosphate + an unfolded polypeptide.. In terms of biological role, together with its co-chaperonin GroES, plays an essential role in assisting protein folding. The GroEL-GroES system forms a nano-cage that allows encapsulation of the non-native substrate proteins and provides a physical environment optimized to promote and accelerate protein folding. The protein is Chaperonin GroEL of Sodalis glossinidius.